Here is a 267-residue protein sequence, read N- to C-terminus: NAD kinase 2 (267 aa).

Residue aspartate 52 is the Proton acceptor of the active site. NAD(+) is bound by residues 52–53 (DA), 124–125 (NE), arginine 151, aspartate 153, 164–169 (TAYNKS), and alanine 188.

The protein belongs to the NAD kinase family. The cofactor is a divalent metal cation.

It localises to the cytoplasm. The catalysed reaction is NAD(+) + ATP = ADP + NADP(+) + H(+). Involved in the regulation of the intracellular balance of NAD and NADP, and is a key enzyme in the biosynthesis of NADP. Catalyzes specifically the phosphorylation on 2'-hydroxyl of the adenosine moiety of NAD to yield NADP. The polypeptide is NAD kinase 2 (Bacillus cereus (strain ATCC 14579 / DSM 31 / CCUG 7414 / JCM 2152 / NBRC 15305 / NCIMB 9373 / NCTC 2599 / NRRL B-3711)).